The primary structure comprises 423 residues: UDP-N-acetylglucosamine 1-carboxyvinyltransferase (423 aa).

Residue 21–22 (KN) participates in phosphoenolpyruvate binding. Arg92 contributes to the UDP-N-acetyl-alpha-D-glucosamine binding site. The active-site Proton donor is Cys116. At Cys116 the chain carries 2-(S-cysteinyl)pyruvic acid O-phosphothioketal. Asp305 and Val327 together coordinate UDP-N-acetyl-alpha-D-glucosamine.

Belongs to the EPSP synthase family. MurA subfamily.

The protein resides in the cytoplasm. It catalyses the reaction phosphoenolpyruvate + UDP-N-acetyl-alpha-D-glucosamine = UDP-N-acetyl-3-O-(1-carboxyvinyl)-alpha-D-glucosamine + phosphate. It functions in the pathway cell wall biogenesis; peptidoglycan biosynthesis. Cell wall formation. Adds enolpyruvyl to UDP-N-acetylglucosamine. This is UDP-N-acetylglucosamine 1-carboxyvinyltransferase from Fervidobacterium nodosum (strain ATCC 35602 / DSM 5306 / Rt17-B1).